A 461-amino-acid polypeptide reads, in one-letter code: Photosystem II CP43 reaction center protein (461 aa).

The propeptide occupies 1–2 (ME). Thr3 is subject to N-acetylthreonine. A Phosphothreonine modification is found at Thr3. Helical transmembrane passes span 57-81 (LFEV…PHLA), 122-143 (LIGP…KDKN), 166-188 (KAMY…RIIT), 243-263 (QPWA…LSYS), and 279-300 (WFNN…ASQS). Glu355 is a binding site for [CaMn4O5] cluster. The helical transmembrane segment at 435 to 459 (RARAAAAGFEKGIDRLTEPVLSLKP) threads the bilayer.

It belongs to the PsbB/PsbC family. PsbC subfamily. As to quaternary structure, PSII is composed of 1 copy each of membrane proteins PsbA, PsbB, PsbC, PsbD, PsbE, PsbF, PsbH, PsbI, PsbJ, PsbK, PsbL, PsbM, PsbT, PsbX, PsbY, PsbZ, Psb30/Ycf12, at least 3 peripheral proteins of the oxygen-evolving complex and a large number of cofactors. It forms dimeric complexes. Binds multiple chlorophylls and provides some of the ligands for the Ca-4Mn-5O cluster of the oxygen-evolving complex. It may also provide a ligand for a Cl- that is required for oxygen evolution. PSII binds additional chlorophylls, carotenoids and specific lipids. is required as a cofactor.

The protein resides in the plastid. It localises to the chloroplast thylakoid membrane. One of the components of the core complex of photosystem II (PSII). It binds chlorophyll and helps catalyze the primary light-induced photochemical processes of PSII. PSII is a light-driven water:plastoquinone oxidoreductase, using light energy to abstract electrons from H(2)O, generating O(2) and a proton gradient subsequently used for ATP formation. This chain is Photosystem II CP43 reaction center protein, found in Stigeoclonium helveticum (Green alga).